Reading from the N-terminus, the 146-residue chain is Small ribosomal subunit protein bS6 (146 aa).

Residues 106–146 (QAAATQRAAERRAQREAERNAAQAQSSASNQARTAATTSGK) are disordered. Residues 113 to 124 (AAERRAQREAER) are compositionally biased toward basic and acidic residues. The span at 125 to 146 (NAAQAQSSASNQARTAATTSGK) shows a compositional bias: low complexity.

It belongs to the bacterial ribosomal protein bS6 family.

Its function is as follows. Binds together with bS18 to 16S ribosomal RNA. This Oenococcus oeni (strain ATCC BAA-331 / PSU-1) protein is Small ribosomal subunit protein bS6.